The chain runs to 152 residues: Em-like protein GEA1 (152 aa).

2 stretches are compositionally biased toward basic and acidic residues: residues 1–17 and 32–63; these read MASK…KAKQ and EAQE…IGHK. Residues 1-63 are disordered; sequence MASKQLSREE…HEGYQEIGHK (63 aa). 4 repeat units span residues 44-63, 64-83, 84-103, and 104-123. The 4 X 20 AA tandem repeats stretch occupies residues 44–123; the sequence is GGQTRKEQLG…HEGYKEMGRK (80 aa). A disordered region spans residues 116–152; that stretch reads GYKEMGRKGGLSTMEKSGGERAEEEGIEIDESKFTNK.

It belongs to the small hydrophilic plant seed protein family. As to expression, in seeds only. Specifically located to vascular bundles in the cotyledon and axis of the dry seed. Also found in the epiderm and outer layers of the cortex in the embryo axis.

Functionally, it is thought to provide protection for the cytoplasm during the desiccation stage of embryo development. This Arabidopsis thaliana (Mouse-ear cress) protein is Em-like protein GEA1 (EM1).